The primary structure comprises 231 residues: Large ribosomal subunit protein uL1 (231 aa).

Belongs to the universal ribosomal protein uL1 family. Part of the 50S ribosomal subunit.

In terms of biological role, binds directly to 23S rRNA. The L1 stalk is quite mobile in the ribosome, and is involved in E site tRNA release. Protein L1 is also a translational repressor protein, it controls the translation of the L11 operon by binding to its mRNA. This Hydrogenovibrio crunogenus (strain DSM 25203 / XCL-2) (Thiomicrospira crunogena) protein is Large ribosomal subunit protein uL1.